Here is a 455-residue protein sequence, read N- to C-terminus: tRNA modification GTPase MnmE (455 aa).

A (6S)-5-formyl-5,6,7,8-tetrahydrofolate-binding site is contributed by Arg22. Positions 43–67 (RRATRAALRSPPSGPGPTGPGPEEG) are disordered. Positions 92 and 132 each coordinate (6S)-5-formyl-5,6,7,8-tetrahydrofolate. The region spanning 228–381 (GLQVAVVGAP…LEAALESRAR (154 aa)) is the TrmE-type G domain. K(+) is bound at residue Asn238. GTP-binding positions include 238-243 (NVGKSS), 257-263 (SDIAGTT), and 282-285 (DTAG). Mg(2+) is bound at residue Ser242. K(+) contacts are provided by Ser257, Ile259, and Thr262. Thr263 provides a ligand contact to Mg(2+). Lys455 serves as a coordination point for (6S)-5-formyl-5,6,7,8-tetrahydrofolate.

It belongs to the TRAFAC class TrmE-Era-EngA-EngB-Septin-like GTPase superfamily. TrmE GTPase family. In terms of assembly, homodimer. Heterotetramer of two MnmE and two MnmG subunits. K(+) serves as cofactor.

Its subcellular location is the cytoplasm. In terms of biological role, exhibits a very high intrinsic GTPase hydrolysis rate. Involved in the addition of a carboxymethylaminomethyl (cmnm) group at the wobble position (U34) of certain tRNAs, forming tRNA-cmnm(5)s(2)U34. In Rhodospirillum rubrum (strain ATCC 11170 / ATH 1.1.1 / DSM 467 / LMG 4362 / NCIMB 8255 / S1), this protein is tRNA modification GTPase MnmE.